Reading from the N-terminus, the 146-residue chain is NADH-quinone oxidoreductase subunit A (146 aa).

The next 3 membrane-spanning stretches (helical) occupy residues 4–24 (IYHW…VFML), 63–83 (LIAM…AWAI), and 91–111 (IGFS…IYLI).

The protein belongs to the complex I subunit 3 family. As to quaternary structure, NDH-1 is composed of 13 different subunits. Subunits NuoA, H, J, K, L, M, N constitute the membrane sector of the complex.

The protein localises to the cell inner membrane. The catalysed reaction is a quinone + NADH + 5 H(+)(in) = a quinol + NAD(+) + 4 H(+)(out). Functionally, NDH-1 shuttles electrons from NADH, via FMN and iron-sulfur (Fe-S) centers, to quinones in the respiratory chain. The immediate electron acceptor for the enzyme in this species is believed to be ubiquinone. Couples the redox reaction to proton translocation (for every two electrons transferred, four hydrogen ions are translocated across the cytoplasmic membrane), and thus conserves the redox energy in a proton gradient. In Blochmanniella pennsylvanica (strain BPEN), this protein is NADH-quinone oxidoreductase subunit A.